Here is a 188-residue protein sequence, read N- to C-terminus: ATP synthase subunit delta (188 aa).

This sequence belongs to the ATPase delta chain family. As to quaternary structure, F-type ATPases have 2 components, F(1) - the catalytic core - and F(0) - the membrane proton channel. F(1) has five subunits: alpha(3), beta(3), gamma(1), delta(1), epsilon(1). F(0) has three main subunits: a(1), b(2) and c(10-14). The alpha and beta chains form an alternating ring which encloses part of the gamma chain. F(1) is attached to F(0) by a central stalk formed by the gamma and epsilon chains, while a peripheral stalk is formed by the delta and b chains.

The protein localises to the cell inner membrane. In terms of biological role, f(1)F(0) ATP synthase produces ATP from ADP in the presence of a proton or sodium gradient. F-type ATPases consist of two structural domains, F(1) containing the extramembraneous catalytic core and F(0) containing the membrane proton channel, linked together by a central stalk and a peripheral stalk. During catalysis, ATP synthesis in the catalytic domain of F(1) is coupled via a rotary mechanism of the central stalk subunits to proton translocation. This protein is part of the stalk that links CF(0) to CF(1). It either transmits conformational changes from CF(0) to CF(1) or is implicated in proton conduction. This is ATP synthase subunit delta from Rhizobium johnstonii (strain DSM 114642 / LMG 32736 / 3841) (Rhizobium leguminosarum bv. viciae).